We begin with the raw amino-acid sequence, 93 residues long: Small ribosomal subunit protein uS19 (93 aa).

The protein belongs to the universal ribosomal protein uS19 family.

Its function is as follows. Protein S19 forms a complex with S13 that binds strongly to the 16S ribosomal RNA. The polypeptide is Small ribosomal subunit protein uS19 (Campylobacter fetus subsp. fetus (strain 82-40)).